The following is a 155-amino-acid chain: Urease accessory protein UreE (155 aa).

The protein belongs to the UreE family.

The protein localises to the cytoplasm. Its function is as follows. Involved in urease metallocenter assembly. Binds nickel. Probably functions as a nickel donor during metallocenter assembly. The sequence is that of Urease accessory protein UreE from Synechococcus sp. (strain CC9311).